Consider the following 218-residue polypeptide: LexA repressor (218 aa).

The H-T-H motif DNA-binding region spans 28–48 (RAEIAAEFGFSSPNSAEEHLR). Residues Ser136 and Lys173 each act as for autocatalytic cleavage activity in the active site.

The protein belongs to the peptidase S24 family. As to quaternary structure, homodimer.

The catalysed reaction is Hydrolysis of Ala-|-Gly bond in repressor LexA.. Its function is as follows. Represses a number of genes involved in the response to DNA damage (SOS response), including recA and lexA. In the presence of single-stranded DNA, RecA interacts with LexA causing an autocatalytic cleavage which disrupts the DNA-binding part of LexA, leading to derepression of the SOS regulon and eventually DNA repair. In Cupriavidus metallidurans (strain ATCC 43123 / DSM 2839 / NBRC 102507 / CH34) (Ralstonia metallidurans), this protein is LexA repressor.